A 334-amino-acid polypeptide reads, in one-letter code: Beta-glucanase (334 aa).

The first 27 residues, 1-27, serve as a signal peptide directing secretion; the sequence is MKNRVISLLMASLLLVLSVIVAPFYKA. One can recognise a GH16 domain in the interval 28-248; it reads EAATVVNTPF…YVKYYPNGVP (221 aa). Glu136 functions as the Nucleophile in the catalytic mechanism. The active-site Proton donor is Glu140. A Dockerin domain is found at 267–334; sequence NLPLKGDVNG…RYLIRAIPSL (68 aa).

This sequence belongs to the glycosyl hydrolase 16 family. May form part of a multienzyme complex (cellulosome).

It catalyses the reaction Hydrolysis of (1-&gt;4)-beta-D-glucosidic linkages in beta-D-glucans containing (1-&gt;3)- and (1-&gt;4)-bonds.. The polypeptide is Beta-glucanase (licB) (Acetivibrio thermocellus (strain ATCC 27405 / DSM 1237 / JCM 9322 / NBRC 103400 / NCIMB 10682 / NRRL B-4536 / VPI 7372) (Clostridium thermocellum)).